The sequence spans 379 residues: UDP-4-amino-4-deoxy-L-arabinose--oxoglutarate aminotransferase (379 aa).

Lys182 is modified (N6-(pyridoxal phosphate)lysine).

The protein belongs to the DegT/DnrJ/EryC1 family. ArnB subfamily. In terms of assembly, homodimer. Requires pyridoxal 5'-phosphate as cofactor.

The catalysed reaction is UDP-4-amino-4-deoxy-beta-L-arabinose + 2-oxoglutarate = UDP-beta-L-threo-pentopyranos-4-ulose + L-glutamate. It participates in nucleotide-sugar biosynthesis; UDP-4-deoxy-4-formamido-beta-L-arabinose biosynthesis; UDP-4-deoxy-4-formamido-beta-L-arabinose from UDP-alpha-D-glucuronate: step 2/3. Its pathway is bacterial outer membrane biogenesis; lipopolysaccharide biosynthesis. Catalyzes the conversion of UDP-4-keto-arabinose (UDP-Ara4O) to UDP-4-amino-4-deoxy-L-arabinose (UDP-L-Ara4N). The modified arabinose is attached to lipid A and is required for resistance to polymyxin and cationic antimicrobial peptides. This chain is UDP-4-amino-4-deoxy-L-arabinose--oxoglutarate aminotransferase, found in Salmonella agona (strain SL483).